Reading from the N-terminus, the 463-residue chain is Altered inheritance of mitochondria protein 23, mitochondrial (463 aa).

A mitochondrion-targeting transit peptide spans 1-69 (MKLHTRTLLA…TRFGNNNERY (69 aa)). Disordered stretches follow at residues 25-124 (LNRP…NQKL), 208-229 (IHSSSRKADSKTEDGADKGAST), and 391-449 (KKPT…KKLT). Polar residues predominate over residues 48 to 79 (QPRTGSNLSPRQTRFGNNNERYGSASGKQLGQ). Positions 94–114 (NHNNNSNNNNNGGYPSSNVNS) are enriched in low complexity. The span at 213–224 (RKADSKTEDGAD) shows a compositional bias: basic and acidic residues. Polar residues predominate over residues 391–405 (KKPTTGGTNSTSTIK). Composition is skewed to basic and acidic residues over residues 406–423 (QTDKNRDGTIRDKKKEKL) and 440–449 (PPAKEKKKLT).

It belongs to the AIM23 family.

The protein localises to the mitochondrion. This Lodderomyces elongisporus (strain ATCC 11503 / CBS 2605 / JCM 1781 / NBRC 1676 / NRRL YB-4239) (Yeast) protein is Altered inheritance of mitochondria protein 23, mitochondrial (AIM23).